Consider the following 50-residue polypeptide: Tubulin alpha chain (50 aa).

N28 lines the GTP pocket. E40 is an active-site residue.

Belongs to the tubulin family. As to quaternary structure, dimer of alpha and beta chains. A typical microtubule is a hollow water-filled tube with an outer diameter of 25 nm and an inner diameter of 15 nM. Alpha-beta heterodimers associate head-to-tail to form protofilaments running lengthwise along the microtubule wall with the beta-tubulin subunit facing the microtubule plus end conferring a structural polarity. Microtubules usually have 13 protofilaments but different protofilament numbers can be found in some organisms and specialized cells. Requires Mg(2+) as cofactor.

The protein localises to the cytoplasm. It localises to the cytoskeleton. The catalysed reaction is GTP + H2O = GDP + phosphate + H(+). Tubulin is the major constituent of microtubules, a cylinder consisting of laterally associated linear protofilaments composed of alpha- and beta-tubulin heterodimers. Microtubules grow by the addition of GTP-tubulin dimers to the microtubule end, where a stabilizing cap forms. Below the cap, tubulin dimers are in GDP-bound state, owing to GTPase activity of alpha-tubulin. In Populus euphratica (Euphrates poplar), this protein is Tubulin alpha chain.